The sequence spans 519 residues: Xylose import ATP-binding protein XylG (519 aa).

2 consecutive ABC transporter domains span residues Met-6–Glu-245 and Phe-262–Val-507. Gly-38 to Ser-45 serves as a coordination point for ATP.

The protein belongs to the ABC transporter superfamily. Xylose importer (TC 3.A.1.2.4) family. As to quaternary structure, the complex is composed of two ATP-binding proteins (XylG), two transmembrane proteins (XylH) and a solute-binding protein (XylF).

Its subcellular location is the cell inner membrane. It catalyses the reaction D-xylose(out) + ATP + H2O = D-xylose(in) + ADP + phosphate + H(+). Part of the ABC transporter complex XylFGH involved in xylose import. Responsible for energy coupling to the transport system. The chain is Xylose import ATP-binding protein XylG from Paraburkholderia xenovorans (strain LB400).